Consider the following 184-residue polypeptide: Protein YrdA (184 aa).

The protein belongs to the gamma-class carbonic anhydrase family.

The protein is Protein YrdA (yrdA) of Escherichia coli (strain K12).